The primary structure comprises 2092 residues: Nonribosomal peptide synthetase echPS (2092 aa).

The interval F13–R406 is adenylation 1. The 77-residue stretch at S524 to T600 folds into the Carrier 1 domain. O-(pantetheine 4'-phosphoryl)serine is present on S561. Positions S596–T626 are disordered. Over residues D605–P624 the composition is skewed to polar residues. Positions P624–D1017 are condensation 1. The tract at residues A1068 to R1446 is adenylation 2. In terms of domain architecture, Carrier 2 spans I1544–Q1622. Residue S1582 is modified to O-(pantetheine 4'-phosphoryl)serine. A condensation 2 region spans residues S1663–I2047.

It belongs to the NRP synthetase family. Pantetheine 4'-phosphate is required as a cofactor.

The catalysed reaction is L-tryptophan + L-alanine + 2 ATP = cyclo(L-tryptophyl-L-alanyl) + 2 ADP + 2 phosphate + 2 H(+). It participates in secondary metabolite biosynthesis. Its pathway is alkaloid biosynthesis. In terms of biological role, nonribosomal peptide synthetase; part of the gene cluster that mediates the biosynthesis of echinulin family alkaloid. The pathway begins with the biosynthesis of the cyclic dipeptide cyclo-L-Trp-L-Ala (cyclo-TA) by the NRPS echPS via condensation of L-alanine and L-tryptophan. The prenyltransferase echPT1 then catalyzes the first prenylation step, a reverse prenylation reaction at C2, to yield preechinulin. Preechinulin is the substrate of the cytochrome P450 monooxygenase echP450 that catalyzes the formation of the double bond between C10 and C11 to produce neoechulin A. The unique prenyltransferase echPT2 functions as a competitive enzyme with echP450 for preechinulin metabolization and uses preechinulin for effective regiospecific prenylations. Preechinulin is prenylated by echPT2 at C5 or C7. C7-prenylation leads to accumulation of tardioxopiperazine B without further modification by echPT2. In contrast, the C5-prenylated tardioxopiperazine A can be prenylated again by echPT2, predominantly at C7 to form echinulin or less frequently at C4 to give variecolorin L. EchPT2 also accepts neoechilunin A to produce varlecolorin G (prenylation at C5) or isoechinulin A (prenylation at C7). EchPT2 further converts isoechinulin A into dehydroechinulin. Moreover, a yet unidentified enzyme can also convert neoechilunin A into neoechilunin B by introducing a double bond between positions C14 and C17 and thus provides a further substrate to echPT2 for C5 and C7 prenylation. The sequence is that of Nonribosomal peptide synthetase echPS from Aspergillus ruber (strain CBS 135680).